The chain runs to 191 residues: dCTP deaminase (191 aa).

Residues 112-117, 136-138, Gln157, Tyr173, and Gln183 each bind dCTP; these read KSTYAR and TLE. Glu138 serves as the catalytic Proton donor/acceptor.

Belongs to the dCTP deaminase family. Homotrimer.

The catalysed reaction is dCTP + H2O + H(+) = dUTP + NH4(+). It functions in the pathway pyrimidine metabolism; dUMP biosynthesis; dUMP from dCTP (dUTP route): step 1/2. Functionally, catalyzes the deamination of dCTP to dUTP. The protein is dCTP deaminase of Psychrobacter arcticus (strain DSM 17307 / VKM B-2377 / 273-4).